Reading from the N-terminus, the 140-residue chain is Nucleoside diphosphate kinase (140 aa).

ATP is bound by residues Lys-11, Phe-59, Arg-87, Thr-93, Arg-104, and Asn-114. His-117 (pros-phosphohistidine intermediate) is an active-site residue.

Belongs to the NDK family. Homotetramer. Mg(2+) serves as cofactor.

The protein localises to the cytoplasm. The enzyme catalyses a 2'-deoxyribonucleoside 5'-diphosphate + ATP = a 2'-deoxyribonucleoside 5'-triphosphate + ADP. It catalyses the reaction a ribonucleoside 5'-diphosphate + ATP = a ribonucleoside 5'-triphosphate + ADP. Functionally, major role in the synthesis of nucleoside triphosphates other than ATP. The ATP gamma phosphate is transferred to the NDP beta phosphate via a ping-pong mechanism, using a phosphorylated active-site intermediate. This Rhizorhabdus wittichii (strain DSM 6014 / CCUG 31198 / JCM 15750 / NBRC 105917 / EY 4224 / RW1) (Sphingomonas wittichii) protein is Nucleoside diphosphate kinase.